Here is a 156-residue protein sequence, read N- to C-terminus: SsrA-binding protein (156 aa).

The protein belongs to the SmpB family.

Its subcellular location is the cytoplasm. Its function is as follows. Required for rescue of stalled ribosomes mediated by trans-translation. Binds to transfer-messenger RNA (tmRNA), required for stable association of tmRNA with ribosomes. tmRNA and SmpB together mimic tRNA shape, replacing the anticodon stem-loop with SmpB. tmRNA is encoded by the ssrA gene; the 2 termini fold to resemble tRNA(Ala) and it encodes a 'tag peptide', a short internal open reading frame. During trans-translation Ala-aminoacylated tmRNA acts like a tRNA, entering the A-site of stalled ribosomes, displacing the stalled mRNA. The ribosome then switches to translate the ORF on the tmRNA; the nascent peptide is terminated with the 'tag peptide' encoded by the tmRNA and targeted for degradation. The ribosome is freed to recommence translation, which seems to be the essential function of trans-translation. The protein is SsrA-binding protein of Clostridium botulinum (strain Alaska E43 / Type E3).